Here is a 439-residue protein sequence, read N- to C-terminus: GTPase Der (439 aa).

2 consecutive EngA-type G domains span residues 4–169 (AMVA…PEND) and 177–352 (IKIA…EEYN). Residues 10-17 (GRPNVGKS), 57-61 (DTGGL), 120-123 (NKVD), 183-190 (GRPNVGKS), 230-234 (DTAGI), and 295-298 (NKWD) each bind GTP. The 85-residue stretch at 353-437 (KRITTGLLNN…PIVISTKKRG (85 aa)) folds into the KH-like domain.

This sequence belongs to the TRAFAC class TrmE-Era-EngA-EngB-Septin-like GTPase superfamily. EngA (Der) GTPase family. In terms of assembly, associates with the 50S ribosomal subunit.

Its function is as follows. GTPase that plays an essential role in the late steps of ribosome biogenesis. This Caldanaerobacter subterraneus subsp. tengcongensis (strain DSM 15242 / JCM 11007 / NBRC 100824 / MB4) (Thermoanaerobacter tengcongensis) protein is GTPase Der.